The sequence spans 188 residues: Elongation factor P (188 aa).

An N6-(3,6-diaminohexanoyl)-5-hydroxylysine modification is found at lysine 34.

The protein belongs to the elongation factor P family. In terms of processing, may be beta-lysylated on the epsilon-amino group of Lys-34 by the combined action of EpmA and EpmB, and then hydroxylated on the C5 position of the same residue by EpmC (if this protein is present). Lysylation is critical for the stimulatory effect of EF-P on peptide-bond formation. The lysylation moiety may extend toward the peptidyltransferase center and stabilize the terminal 3-CCA end of the tRNA. Hydroxylation of the C5 position on Lys-34 may allow additional potential stabilizing hydrogen-bond interactions with the P-tRNA.

The protein localises to the cytoplasm. The protein operates within protein biosynthesis; polypeptide chain elongation. Functionally, involved in peptide bond synthesis. Alleviates ribosome stalling that occurs when 3 or more consecutive Pro residues or the sequence PPG is present in a protein, possibly by augmenting the peptidyl transferase activity of the ribosome. Modification of Lys-34 is required for alleviation. This is Elongation factor P from Proteus mirabilis (strain HI4320).